The following is a 130-amino-acid chain: uncharacterized protein (130 aa).

Residues 8–28 form a helical membrane-spanning segment; the sequence is PFILMIIVLGLFLVSIGGYYY.

It is found in the membrane. This is an uncharacterized protein from Bacillus anthracis.